The sequence spans 126 residues: Large ribosomal subunit protein bL19 (126 aa).

This sequence belongs to the bacterial ribosomal protein bL19 family.

In terms of biological role, this protein is located at the 30S-50S ribosomal subunit interface and may play a role in the structure and function of the aminoacyl-tRNA binding site. The sequence is that of Large ribosomal subunit protein bL19 from Thiobacillus denitrificans (strain ATCC 25259 / T1).